The chain runs to 503 residues: Cobyric acid synthase (503 aa).

One can recognise a GATase cobBQ-type domain in the interval 260–453; it reads KIGVAAIYFP…FHALFDESSV (194 aa). The Nucleophile role is filled by Cys-341. His-445 is an active-site residue.

It belongs to the CobB/CobQ family. CobQ subfamily.

The protein operates within cofactor biosynthesis; adenosylcobalamin biosynthesis. Functionally, catalyzes amidations at positions B, D, E, and G on adenosylcobyrinic A,C-diamide. NH(2) groups are provided by glutamine, and one molecule of ATP is hydrogenolyzed for each amidation. This Pelodictyon phaeoclathratiforme (strain DSM 5477 / BU-1) protein is Cobyric acid synthase.